Consider the following 859-residue polypeptide: Envelope glycoprotein gp160 (859 aa).

An N-terminal signal peptide occupies residues 1-28; sequence METQRNYPSLWRWGTLILGMLLICSVVG. Over 29–687 the chain is Extracellular; that stretch reads NLWVTVYYGV…ITNWLWYIRI (659 aa). An intrachain disulfide couples cysteine 50 to cysteine 70. Residues asparagine 84, asparagine 131, asparagine 134, asparagine 139, asparagine 140, asparagine 154, asparagine 158, asparagine 188, asparagine 200, asparagine 237, asparagine 244, asparagine 265, asparagine 280, asparagine 299, asparagine 305, asparagine 335, asparagine 342, and asparagine 358 are each glycosylated (N-linked (GlcNAc...) asparagine; by host). Cystine bridges form between cysteine 115-cysteine 208, cysteine 122-cysteine 199, cysteine 127-cysteine 155, cysteine 221-cysteine 250, and cysteine 231-cysteine 242. Residues 127–154 form a V1 region; that stretch reads CSSVNATNVTKSNNSTDINIGEIQEQRN. A V2 region spans residues 155 to 199; that stretch reads CSFNVTTAIRDKNQKVHALFYRADIVQIDEGERNKSDNHYRLINC. A V3 region spans residues 300–333; sequence CTRTGNNTRKSIRIGPGQAFYATGDIIGDIRRAY. Residues cysteine 300 and cysteine 334 are joined by a disulfide bond. Positions 366 to 376 are CD4-binding loop; that stretch reads PAGGDIEIITH. 2 cysteine pairs are disulfide-bonded: cysteine 380–cysteine 450 and cysteine 387–cysteine 423. The tract at residues 387 to 423 is V4; the sequence is CNTTKLFNSTWTNSSYTNDTYNSNSTEDITGNITLQC. N-linked (GlcNAc...) asparagine; by host glycans are attached at residues asparagine 388, asparagine 394, asparagine 399, asparagine 404, asparagine 410, asparagine 418, asparagine 447, asparagine 453, asparagine 464, and asparagine 468. The tract at residues 466 to 474 is V5; that stretch reads TNNVTFRPG. The tract at residues 515 to 535 is fusion peptide; the sequence is AVGMGAFFLGFLGAAGSTMGA. The interval 577–595 is immunosuppression; it reads KQLQARVLAVERYLKDQQL. A disulfide bond links cysteine 601 and cysteine 607. Residues asparagine 614, asparagine 619, asparagine 628, and asparagine 640 are each glycosylated (N-linked (GlcNAc...) asparagine; by host). The stretch at 636–670 forms a coiled coil; the sequence is KQINNYTDEIYRLLEVSQNQQEKNEQDLLALDKWA. The segment at 665 to 686 is MPER; binding to GalCer; the sequence is ALDKWANLWNWFSITNWLWYIR. The helical transmembrane segment at 688-708 threads the bilayer; that stretch reads FIMIVGGIIGLRIVFAVLSIV. Residues 709 to 859 lie on the Cytoplasmic side of the membrane; that stretch reads NRVRQGYSPL…IRQGFERALL (151 aa). Residues 715 to 718 carry the YXXL motif; contains endocytosis signal motif; it reads YSPL. Residues 724–743 are disordered; the sequence is IPNQRGPDRPREIEEEGGEQ. Cysteine 767 is lipidated: S-palmitoyl cysteine; by host. The Di-leucine internalization motif signature appears at 858-859; it reads LL.

This sequence belongs to the HIV-1 env protein family. In terms of assembly, the mature envelope protein (Env) consists of a homotrimer of non-covalently associated gp120-gp41 heterodimers. The resulting complex protrudes from the virus surface as a spike. There seems to be as few as 10 spikes on the average virion. Interacts with host CD4, CCR5 and CXCR4. Gp120 also interacts with the C-type lectins CD209/DC-SIGN and CLEC4M/DC-SIGNR (collectively referred to as DC-SIGN(R)). Gp120 and gp41 interact with GalCer. Gp120 interacts with host ITGA4/ITGB7 complex; on CD4+ T-cells, this interaction results in rapid activation of integrin ITGAL/LFA-1, which facilitates efficient cell-to-cell spreading of HIV-1. Gp120 interacts with cell-associated heparan sulfate; this interaction increases virus infectivity on permissive cells and may be involved in infection of CD4- cells. The mature envelope protein (Env) consists of a homotrimer of non-covalently associated gp120-gp41 heterodimers. The resulting complex protrudes from the virus surface as a spike. There seems to be as few as 10 spikes on the average virion. Post-translationally, highly glycosylated by host. The high number of glycan on the protein is reffered to as 'glycan shield' because it contributes to hide protein sequence from adaptive immune system. In terms of processing, palmitoylation of the transmembrane protein and of Env polyprotein (prior to its proteolytic cleavage) is essential for their association with host cell membrane lipid rafts. Palmitoylation is therefore required for envelope trafficking to classical lipid rafts, but not for viral replication. Specific enzymatic cleavages in vivo yield mature proteins. Envelope glycoproteins are synthesized as an inactive precursor that is heavily N-glycosylated and processed likely by host cell furin in the Golgi to yield the mature SU and TM proteins. The cleavage site between SU and TM requires the minimal sequence [KR]-X-[KR]-R. About 2 of the 9 disulfide bonds of gp41 are reduced by P4HB/PDI, following binding to CD4 receptor.

The protein localises to the virion membrane. Its subcellular location is the host cell membrane. It localises to the host endosome membrane. In terms of biological role, oligomerizes in the host endoplasmic reticulum into predominantly trimers. In a second time, gp160 transits in the host Golgi, where glycosylation is completed. The precursor is then proteolytically cleaved in the trans-Golgi and thereby activated by cellular furin or furin-like proteases to produce gp120 and gp41. Attaches the virus to the host lymphoid cell by binding to the primary receptor CD4. This interaction induces a structural rearrangement creating a high affinity binding site for a chemokine coreceptor like CXCR4 and/or CCR5. Acts as a ligand for CD209/DC-SIGN and CLEC4M/DC-SIGNR, which are respectively found on dendritic cells (DCs), and on endothelial cells of liver sinusoids and lymph node sinuses. These interactions allow capture of viral particles at mucosal surfaces by these cells and subsequent transmission to permissive cells. HIV subverts the migration properties of dendritic cells to gain access to CD4+ T-cells in lymph nodes. Virus transmission to permissive T-cells occurs either in trans (without DCs infection, through viral capture and transmission), or in cis (following DCs productive infection, through the usual CD4-gp120 interaction), thereby inducing a robust infection. In trans infection, bound virions remain infectious over days and it is proposed that they are not degraded, but protected in non-lysosomal acidic organelles within the DCs close to the cell membrane thus contributing to the viral infectious potential during DCs' migration from the periphery to the lymphoid tissues. On arrival at lymphoid tissues, intact virions recycle back to DCs' cell surface allowing virus transmission to CD4+ T-cells. Functionally, acts as a class I viral fusion protein. Under the current model, the protein has at least 3 conformational states: pre-fusion native state, pre-hairpin intermediate state, and post-fusion hairpin state. During fusion of viral and target intracellular membranes, the coiled coil regions (heptad repeats) assume a trimer-of-hairpins structure, positioning the fusion peptide in close proximity to the C-terminal region of the ectodomain. The formation of this structure appears to drive apposition and subsequent fusion of viral and target cell membranes. Complete fusion occurs in host cell endosomes and is dynamin-dependent, however some lipid transfer might occur at the plasma membrane. The virus undergoes clathrin-dependent internalization long before endosomal fusion, thus minimizing the surface exposure of conserved viral epitopes during fusion and reducing the efficacy of inhibitors targeting these epitopes. Membranes fusion leads to delivery of the nucleocapsid into the cytoplasm. The protein is Envelope glycoprotein gp160 of Human immunodeficiency virus type 1 group M subtype H (isolate VI991) (HIV-1).